We begin with the raw amino-acid sequence, 452 residues long: Down-regulator of invasive growth 1 (452 aa).

Disordered regions lie at residues 1–145 (MAVS…SAPA) and 262–311 (RNKR…ADLR). Composition is skewed to polar residues over residues 12-22 (EDTSIAKSTQD) and 35-53 (KGSSDSNIKNSPGGNSVGQ). The residue at position 45 (Ser-45) is a Phosphoserine. Residues 61–77 (PEEDDSGDKEADHEDSE) show a composition bias toward acidic residues. Basic residues predominate over residues 81–100 (AKKRKAQPLKNPKKSLKRGR). 4 stretches are compositionally biased toward polar residues: residues 107–116 (LSDSNTNTHG), 124–145 (LASSNSAHFPPVANQNVKSAPA), 269–281 (SYDSPLSGTASTG), and 291–307 (RNSSVGSSANAGPTQQR). Ser-126, Ser-142, Ser-272, and Ser-275 each carry phosphoserine. The segment at 212 to 452 (IPPPHMLNKP…KSSSHHRTGK (241 aa)) is interaction with FUS3 and KSS1. The residue at position 330 (Ser-330) is a Phosphoserine. The span at 331–348 (ANTKARSASTSTSTSTST) shows a compositional bias: low complexity. The disordered stretch occupies residues 331-395 (ANTKARSAST…QRTSQPQQQS (65 aa)). The segment covering 349–361 (NRDRSSWHEAEPN) has biased composition (basic and acidic residues). The segment covering 362–372 (KDEEEGTDLAI) has biased composition (acidic residues). The span at 378-395 (PTPTFTTFQRTSQPQQQS) shows a compositional bias: low complexity. Residue Thr-379 is modified to Phosphothreonine. Phosphoserine occurs at positions 395 and 428.

Forms a complex with DIG2, STE12 and either FUS3 or KSS1. The interaction of FUS3 with STE12 depends on the presence of both DIG1 and DIG2. STE12 is lost from FUS3/DIG1/DIG2 complex after pheromone treatment. DIG1 and DIG2 have also been reported to interact with CLN1 and CLN2. In terms of processing, phosphorylated by FUS3 and KSS1, in a pheromone-stimulated manner. Phosphorylation reduces the affinity for STE12.

It is found in the nucleus. In terms of biological role, DIG1 and DIG2 are negative regulators of the filamentation and pheromone induced mating program. DIG1 and DIG2 inhibit the transcriptional activity of STE12 by direct protein-protein interaction. DIG1 colocalizes to promoters with STE12 and redistributes with it during induction of filamentation (by butanol) or mating (by pheromone) to program specific genes, but binding of DIG1 to STE12 is reduced by pheromone treatment. This is Down-regulator of invasive growth 1 (DIG1) from Saccharomyces cerevisiae (strain ATCC 204508 / S288c) (Baker's yeast).